The primary structure comprises 122 residues: Large ribosomal subunit protein uL18 (122 aa).

The protein belongs to the universal ribosomal protein uL18 family. Part of the 50S ribosomal subunit; part of the 5S rRNA/L5/L18/L25 subcomplex. Contacts the 5S and 23S rRNAs.

Functionally, this is one of the proteins that bind and probably mediate the attachment of the 5S RNA into the large ribosomal subunit, where it forms part of the central protuberance. The protein is Large ribosomal subunit protein uL18 of Thermosipho melanesiensis (strain DSM 12029 / CIP 104789 / BI429).